The following is a 473-amino-acid chain: Nuclear distribution protein PAC1 (473 aa).

The 33-residue stretch at 9–41 (QAEELHKSIIAYFLSAKLPKSAAALREEIADSV) folds into the LisH domain. Residues 60-87 (TSVVRLQKKIMDLEARNSALQSELDSAT) are a coiled coil. Over residues 80–93 (QSELDSATPTSLSR) the composition is skewed to polar residues. The segment at 80–99 (QSELDSATPTSLSRRNQDPV) is disordered. WD repeat units follow at residues 113–154 (SHRN…RTIK), 156–196 (HTRA…KNIR), 200–247 (GHDH…CVRT), 250–289 (GHVE…TKST), 292–352 (GHEH…IKTL), 354–393 (GHDN…KCVR), 397–434 (DAHA…ALSG), and 435–472 (VNGI…RVFA).

This sequence belongs to the WD repeat LIS1/nudF family. Self-associates. Interacts with NDL1 and dynein.

The protein resides in the cytoplasm. It is found in the cytoskeleton. It localises to the spindle pole. Functionally, positively regulates the activity of the minus-end directed microtubule motor protein dynein. May enhance dynein-mediated microtubule sliding by targeting dynein to the microtubule plus end. Required for nuclear migration during vegetative growth as well as development. Required for retrograde early endosome (EE) transport from the hyphal tip. Required for localization of dynein to the mitotic spindle poles. Recruits additional proteins to the dynein complex at SPBs. This Ajellomyces dermatitidis (strain ER-3 / ATCC MYA-2586) (Blastomyces dermatitidis) protein is Nuclear distribution protein PAC1.